Here is a 156-residue protein sequence, read N- to C-terminus: Ribosomal RNA large subunit methyltransferase H (156 aa).

Residues L73, G104, and 123–128 (LSDLTL) each bind S-adenosyl-L-methionine.

It belongs to the RNA methyltransferase RlmH family. As to quaternary structure, homodimer.

Its subcellular location is the cytoplasm. It catalyses the reaction pseudouridine(1915) in 23S rRNA + S-adenosyl-L-methionine = N(3)-methylpseudouridine(1915) in 23S rRNA + S-adenosyl-L-homocysteine + H(+). In terms of biological role, specifically methylates the pseudouridine at position 1915 (m3Psi1915) in 23S rRNA. The chain is Ribosomal RNA large subunit methyltransferase H from Leptothrix cholodnii (strain ATCC 51168 / LMG 8142 / SP-6) (Leptothrix discophora (strain SP-6)).